The primary structure comprises 379 residues: Lipid-A-disaccharide synthase (379 aa).

This sequence belongs to the LpxB family.

It catalyses the reaction a lipid X + a UDP-2-N,3-O-bis[(3R)-3-hydroxyacyl]-alpha-D-glucosamine = a lipid A disaccharide + UDP + H(+). Its pathway is bacterial outer membrane biogenesis; LPS lipid A biosynthesis. In terms of biological role, condensation of UDP-2,3-diacylglucosamine and 2,3-diacylglucosamine-1-phosphate to form lipid A disaccharide, a precursor of lipid A, a phosphorylated glycolipid that anchors the lipopolysaccharide to the outer membrane of the cell. In Vibrio cholerae serotype O1 (strain ATCC 39541 / Classical Ogawa 395 / O395), this protein is Lipid-A-disaccharide synthase.